A 1552-amino-acid chain; its full sequence is ABC multidrug transporter lscH (1552 aa).

2 helical membrane passes run 32–52 (ETIL…IPII) and 68–88 (WFKK…VGLW). An N-linked (GlcNAc...) asparagine glycan is attached at asparagine 91. The next 8 helical transmembrane spans lie at 100 to 120 (STPS…LSTI), 158 to 178 (HSAI…MLLL), 280 to 300 (LFQI…IELA), 311 to 331 (NGYG…VSVG), 413 to 433 (AACV…VFLA), 457 to 477 (ALAS…FSVI), 500 to 520 (ILSI…FAGI), and 528 to 548 (LTIA…SPLA). The 280-residue stretch at 280–559 (LFQIGFTYAQ…IVQALPQISG (280 aa)) folds into the ABC transmembrane type-1 1 domain. Positions 573 to 655 (AEERHDPRST…PDANGDSRDA (83 aa)) are disordered. Over residues 581 to 602 (STTTGTSPESNNGSQQTLSDKQ) the composition is skewed to polar residues. Asparagine 592 is a glycosylation site (N-linked (GlcNAc...) asparagine). The ABC transporter 1 domain maps to 639–884 (GHLADTTPDA…AELGWADRDL (246 aa)). 676–683 (GPVGCGKS) provides a ligand contact to ATP. N-linked (GlcNAc...) asparagine glycosylation is found at asparagine 719 and asparagine 834. Residues 887–912 (QQEKPGKDELNHEHGEYSESAPEKLR) show a composition bias toward basic and acidic residues. Residues 887–917 (QQEKPGKDELNHEHGEYSESAPEKLRRSQTN) form a disordered region. Transmembrane regions (helical) follow at residues 957 to 977 (GWLT…CDSF) and 1005 to 1025 (AVLG…LFII). Positions 963–1241 (IFVIAICVYA…ATITSWVTLE (279 aa)) constitute an ABC transmembrane type-1 2 domain. A glycan (N-linked (GlcNAc...) asparagine) is linked at asparagine 1028. 4 helical membrane-spanning segments follow: residues 1076-1096 (AALG…LVCV), 1100-1120 (YMAA…HFYL), 1184-1204 (WITF…IVLT), and 1210-1230 (AIGP…SATM). The ABC transporter 2 domain occupies 1295–1538 (IELDNVTASY…PTSIFKELYL (244 aa)). N-linked (GlcNAc...) asparagine glycans are attached at residues asparagine 1299 and asparagine 1313. An ATP-binding site is contributed by 1328–1335 (GRTGSGKS).

Belongs to the ABC transporter superfamily. ABCC family. Conjugate transporter (TC 3.A.1.208) subfamily.

Its subcellular location is the cell membrane. In terms of biological role, ABC multidrug transporter; part of the gene cluster that mediates the biosynthesis of the lipopeptide antibiotics leucinostatins that show extensive biological activities, including antimalarial, antiviral, antibacterial, antifungal, and antitumor activities, as well as phytotoxic. May be involved in the efflux of leucinostatins. This chain is ABC multidrug transporter lscH, found in Purpureocillium lilacinum (Paecilomyces lilacinus).